We begin with the raw amino-acid sequence, 618 residues long: UvrABC system protein C (618 aa).

Positions 13 to 92 constitute a GIY-YIG domain; the sequence is DKPGVYLMKN…IKKYRPKYNI (80 aa). Residues 204 to 239 form the UVR domain; it reads LDIVENFKLNMEKAAENLEFEKAAMLRDKINIIEKI.

This sequence belongs to the UvrC family. In terms of assembly, interacts with UvrB in an incision complex.

It localises to the cytoplasm. The UvrABC repair system catalyzes the recognition and processing of DNA lesions. UvrC both incises the 5' and 3' sides of the lesion. The N-terminal half is responsible for the 3' incision and the C-terminal half is responsible for the 5' incision. This chain is UvrABC system protein C, found in Clostridium botulinum (strain Loch Maree / Type A3).